The sequence spans 206 residues: Holliday junction branch migration complex subunit RuvA (206 aa).

The interval 1-64 (MIAKLTGLLD…EDNIQLFGFA (64 aa)) is domain I. A domain II region spans residues 65-143 (DTEERDWFRL…SFGAPAPAAA (79 aa)). The segment at 144–154 (TAGKGGAAPAG) is flexible linker. The segment at 154–206 (GPAGAVADAVSALVNLGYRRVEAFTAVNAVAQRLGPEAGVSDLIRAGLKELSP) is domain III.

This sequence belongs to the RuvA family. As to quaternary structure, homotetramer. Forms an RuvA(8)-RuvB(12)-Holliday junction (HJ) complex. HJ DNA is sandwiched between 2 RuvA tetramers; dsDNA enters through RuvA and exits via RuvB. An RuvB hexamer assembles on each DNA strand where it exits the tetramer. Each RuvB hexamer is contacted by two RuvA subunits (via domain III) on 2 adjacent RuvB subunits; this complex drives branch migration. In the full resolvosome a probable DNA-RuvA(4)-RuvB(12)-RuvC(2) complex forms which resolves the HJ.

Its subcellular location is the cytoplasm. Its function is as follows. The RuvA-RuvB-RuvC complex processes Holliday junction (HJ) DNA during genetic recombination and DNA repair, while the RuvA-RuvB complex plays an important role in the rescue of blocked DNA replication forks via replication fork reversal (RFR). RuvA specifically binds to HJ cruciform DNA, conferring on it an open structure. The RuvB hexamer acts as an ATP-dependent pump, pulling dsDNA into and through the RuvAB complex. HJ branch migration allows RuvC to scan DNA until it finds its consensus sequence, where it cleaves and resolves the cruciform DNA. This Rhodospirillum centenum (strain ATCC 51521 / SW) protein is Holliday junction branch migration complex subunit RuvA.